Here is a 659-residue protein sequence, read N- to C-terminus: Protein kinase byr2 (659 aa).

Residues 4 to 67 (YTSKEVAEWL…LKQRDYLREF (64 aa)) form the SAM domain. The segment covering 180 to 190 (PKLSSVLPTST) has biased composition (low complexity). Disordered regions lie at residues 180–209 (PKLS…YQRP) and 354–387 (SFSP…EEDT). The span at 354–365 (SFSPGSSPSFIE) shows a compositional bias: polar residues. Over residues 367–380 (PSPISPTSTTSEDT) the composition is skewed to low complexity. The Protein kinase domain occupies 394 to 658 (WIRGALIGSG…ASELLSHPFV (265 aa)). ATP-binding positions include 400–408 (IGSGSFGQV) and Lys423. Asp522 functions as the Proton acceptor in the catalytic mechanism.

The protein belongs to the protein kinase superfamily. STE Ser/Thr protein kinase family. MAP kinase kinase kinase subfamily. Interacts with rad24 and rad25; these prevent its translocation to the cell membrane during nitrogen starvation.

The protein localises to the cytoplasm. It localises to the cell membrane. The catalysed reaction is L-seryl-[protein] + ATP = O-phospho-L-seryl-[protein] + ADP + H(+). The enzyme catalyses L-threonyl-[protein] + ATP = O-phospho-L-threonyl-[protein] + ADP + H(+). Its function is as follows. Serine/threonine protein kinase involved in conjugation and sporulation. It is thought that it phosphorylates the byr1 protein kinase which itself phosphorylate the spk1 kinase. The chain is Protein kinase byr2 from Schizosaccharomyces pombe (strain 972 / ATCC 24843) (Fission yeast).